A 226-amino-acid chain; its full sequence is PKHD-type hydroxylase LHK_00496 (226 aa).

Residues 78-178 form the Fe2OG dioxygenase domain; the sequence is RFFPPLFNRY…RVASFMWIQS (101 aa). 3 residues coordinate Fe cation: His96, Asp98, and His159. Arg169 is a 2-oxoglutarate binding site.

Fe(2+) is required as a cofactor. L-ascorbate serves as cofactor.

This chain is PKHD-type hydroxylase LHK_00496, found in Laribacter hongkongensis (strain HLHK9).